Consider the following 398-residue polypeptide: Phosphoglycerate kinase (398 aa).

Substrate is bound by residues 21 to 23 (DFN), Arg-36, 59 to 62 (HLGR), Arg-119, and Arg-157. Residues Lys-208, Gly-296, Glu-327, and 354 to 357 (GGDS) contribute to the ATP site.

The protein belongs to the phosphoglycerate kinase family. Monomer.

It localises to the cytoplasm. It carries out the reaction (2R)-3-phosphoglycerate + ATP = (2R)-3-phospho-glyceroyl phosphate + ADP. The protein operates within carbohydrate degradation; glycolysis; pyruvate from D-glyceraldehyde 3-phosphate: step 2/5. This is Phosphoglycerate kinase from Streptococcus equi subsp. zooepidemicus (strain H70).